We begin with the raw amino-acid sequence, 511 residues long: Maturase K (511 aa).

It belongs to the intron maturase 2 family. MatK subfamily.

Its subcellular location is the plastid. It localises to the chloroplast. In terms of biological role, usually encoded in the trnK tRNA gene intron. Probably assists in splicing its own and other chloroplast group II introns. This chain is Maturase K, found in Phleum pratense (Common timothy).